The sequence spans 1021 residues: INO80 complex subunit D (1021 aa).

Residue lysine 87 forms a Glycyl lysine isopeptide (Lys-Gly) (interchain with G-Cter in SUMO2) linkage. Residue serine 132 is modified to Phosphoserine. Disordered regions lie at residues 194–239 (FSTP…PMQG), 514–570 (RGDN…SMPT), 808–844 (RQQYSSDHSHSSPHGSHYDSEHVPSPYSDHITSPHTS), 911–940 (SLSTPPTTSNSETTQPAFATVTPSSSSVLP), and 976–1021 (QLSS…PSPN). The segment covering 224–239 (VCKSPQPQNTSLPMQG) has biased composition (polar residues). The segment covering 520 to 554 (KVQHQQQRKPRKKTKPPALTKKHKKKRRRGPRRPQ) has biased composition (basic residues). Positions 911 to 926 (SLSTPPTTSNSETTQP) are enriched in low complexity. The segment covering 931 to 940 (VTPSSSSVLP) has biased composition (polar residues). Over residues 995 to 1014 (APPTGFTATGATATSTNNAS) the composition is skewed to low complexity.

This sequence belongs to the INO80D family. Component of the chromatin remodeling INO80 complex; specifically part of a complex module associated with the N-terminus of INO80.

Its subcellular location is the nucleus. Functionally, putative regulatory component of the chromatin remodeling INO80 complex which is involved in transcriptional regulation, DNA replication and probably DNA repair. The protein is INO80 complex subunit D of Mus musculus (Mouse).